We begin with the raw amino-acid sequence, 394 residues long: MSQPKRIHRICKGLARFTIRATLYGSWVLGLFPFTFDSRKRRLNRSKWLLAYGLVLNLTLLVLSMLPSTDDHNSVKVEVFQRNPLVKQVEELVEVISLITTLVTHLRTFSRSSELVEILNELLVLDKNHFSKLMLSECHTFNRYVIEKGLVIILEIGSSLVLYFGIPNSKIVVYEAVCIYIVQLEVLMVVMHFHLAVIYIYRYLWIINGQLLDMASRLRRGDSVDPDRIQLLLWLYSRLLDLNHRLTAIYDIQVTLFMATLFSVNIIVGHVLVICWINITRFSLLVIFLLFPQALIINFWDLWQGIAFCDLAESTGKKTSMILKLFNDMENMDQETERRVTEFTLFCSHRRLKVCHLGLLDINYEMGFRMIITNILYVVFLVQFDYMNLKFKTD.

Topologically, residues 1 to 16 (MSQPKRIHRICKGLAR) are cytoplasmic. The chain crosses the membrane as a helical span at residues 17 to 37 (FTIRATLYGSWVLGLFPFTFD). The Extracellular segment spans residues 38-47 (SRKRRLNRSK). A glycan (N-linked (GlcNAc...) asparagine) is linked at asparagine 44. A helical membrane pass occupies residues 48 to 68 (WLLAYGLVLNLTLLVLSMLPS). Topologically, residues 69–148 (TDDHNSVKVE…HTFNRYVIEK (80 aa)) are cytoplasmic. A helical membrane pass occupies residues 149 to 169 (GLVIILEIGSSLVLYFGIPNS). A topological domain (extracellular) is located at residue lysine 170. Residues 171–191 (IVVYEAVCIYIVQLEVLMVVM) form a helical membrane-spanning segment. Residues 192 to 256 (HFHLAVIYIY…TAIYDIQVTL (65 aa)) are Cytoplasmic-facing. The chain crosses the membrane as a helical span at residues 257-277 (FMATLFSVNIIVGHVLVICWI). N-linked (GlcNAc...) asparagine glycosylation occurs at asparagine 278. Over 278 to 281 (NITR) the chain is Extracellular. The chain crosses the membrane as a helical span at residues 282–302 (FSLLVIFLLFPQALIINFWDL). Residues 303 to 361 (WQGIAFCDLAESTGKKTSMILKLFNDMENMDQETERRVTEFTLFCSHRRLKVCHLGLLD) are Cytoplasmic-facing. Residues 362-382 (INYEMGFRMIITNILYVVFLV) form a helical membrane-spanning segment. The Extracellular portion of the chain corresponds to 383 to 394 (QFDYMNLKFKTD).

The protein belongs to the insect chemoreceptor superfamily. Gustatory receptor (GR) family. Gr22e subfamily. As to expression, expressed in neurons of the terminal external chemosensory organ of larvae.

It is found in the cell membrane. Its function is as follows. Probable gustatory receptor which mediates acceptance or avoidance behavior, depending on its substrates. The polypeptide is Putative gustatory receptor 22a (Gr22a) (Drosophila melanogaster (Fruit fly)).